The chain runs to 183 residues: GTP cyclohydrolase 1 (183 aa).

Zn(2+)-binding residues include cysteine 71, histidine 74, and cysteine 142.

Belongs to the GTP cyclohydrolase I family. In terms of assembly, toroid-shaped homodecamer, composed of two pentamers of five dimers.

It catalyses the reaction GTP + H2O = 7,8-dihydroneopterin 3'-triphosphate + formate + H(+). It participates in cofactor biosynthesis; 7,8-dihydroneopterin triphosphate biosynthesis; 7,8-dihydroneopterin triphosphate from GTP: step 1/1. In Leptospira borgpetersenii serovar Hardjo-bovis (strain JB197), this protein is GTP cyclohydrolase 1.